A 425-amino-acid chain; its full sequence is Serine--tRNA ligase (425 aa).

L-serine is bound at residue 229 to 231; the sequence is TAE. An ATP-binding site is contributed by 260–262; it reads RSE. Glu-283 contacts L-serine. 347-350 is an ATP binding site; sequence EISS. Position 384 (Ser-384) interacts with L-serine.

The protein belongs to the class-II aminoacyl-tRNA synthetase family. Type-1 seryl-tRNA synthetase subfamily. As to quaternary structure, homodimer. The tRNA molecule binds across the dimer.

Its subcellular location is the cytoplasm. The catalysed reaction is tRNA(Ser) + L-serine + ATP = L-seryl-tRNA(Ser) + AMP + diphosphate + H(+). It catalyses the reaction tRNA(Sec) + L-serine + ATP = L-seryl-tRNA(Sec) + AMP + diphosphate + H(+). It participates in aminoacyl-tRNA biosynthesis; selenocysteinyl-tRNA(Sec) biosynthesis; L-seryl-tRNA(Sec) from L-serine and tRNA(Sec): step 1/1. Its function is as follows. Catalyzes the attachment of serine to tRNA(Ser). Is also able to aminoacylate tRNA(Sec) with serine, to form the misacylated tRNA L-seryl-tRNA(Sec), which will be further converted into selenocysteinyl-tRNA(Sec). The protein is Serine--tRNA ligase of Rhizorhabdus wittichii (strain DSM 6014 / CCUG 31198 / JCM 15750 / NBRC 105917 / EY 4224 / RW1) (Sphingomonas wittichii).